A 433-amino-acid chain; its full sequence is Enolase (433 aa).

Glutamine 164 contributes to the (2R)-2-phosphoglycerate binding site. Glutamate 206 (proton donor) is an active-site residue. Residues aspartate 243, glutamate 289, and aspartate 316 each contribute to the Mg(2+) site. Residues lysine 341, arginine 370, serine 371, and lysine 392 each contribute to the (2R)-2-phosphoglycerate site. Catalysis depends on lysine 341, which acts as the Proton acceptor.

This sequence belongs to the enolase family. Mg(2+) serves as cofactor.

It localises to the cytoplasm. It is found in the secreted. The protein resides in the cell surface. It carries out the reaction (2R)-2-phosphoglycerate = phosphoenolpyruvate + H2O. It participates in carbohydrate degradation; glycolysis; pyruvate from D-glyceraldehyde 3-phosphate: step 4/5. Functionally, catalyzes the reversible conversion of 2-phosphoglycerate (2-PG) into phosphoenolpyruvate (PEP). It is essential for the degradation of carbohydrates via glycolysis. The sequence is that of Enolase from Borreliella afzelii (strain PKo) (Borrelia afzelii).